Consider the following 116-residue polypeptide: Peptidyl-tRNA hydrolase (116 aa).

Belongs to the PTH2 family.

The protein localises to the cytoplasm. The enzyme catalyses an N-acyl-L-alpha-aminoacyl-tRNA + H2O = an N-acyl-L-amino acid + a tRNA + H(+). The natural substrate for this enzyme may be peptidyl-tRNAs which drop off the ribosome during protein synthesis. This is Peptidyl-tRNA hydrolase from Methanopyrus kandleri (strain AV19 / DSM 6324 / JCM 9639 / NBRC 100938).